The chain runs to 391 residues: GTPase Obg (391 aa).

In terms of domain architecture, Obg spans methionine 1 to leucine 159. Positions alanine 160–glutamate 333 constitute an OBG-type G domain. GTP is bound by residues glycine 166–serine 173, phenylalanine 191–valine 195, aspartate 213–glycine 216, asparagine 283–aspartate 286, and serine 314–alanine 316. Mg(2+) is bound by residues serine 173 and threonine 193.

It belongs to the TRAFAC class OBG-HflX-like GTPase superfamily. OBG GTPase family. As to quaternary structure, monomer. Mg(2+) is required as a cofactor.

It is found in the cytoplasm. An essential GTPase which binds GTP, GDP and possibly (p)ppGpp with moderate affinity, with high nucleotide exchange rates and a fairly low GTP hydrolysis rate. Plays a role in control of the cell cycle, stress response, ribosome biogenesis and in those bacteria that undergo differentiation, in morphogenesis control. This is GTPase Obg from Actinobacillus pleuropneumoniae serotype 5b (strain L20).